The following is a 230-amino-acid chain: MNQVTQFSGNSANLMLYWILKSYYSRFDRIMWIDTLGTFNPAALPLPCLEKTMLVRSFDAQGLKDAVDELESNLKSSEDQAYALCIDSFSNPIGLLMAQGNISFAHAFMMTLGRKCRILTRKFRLAVYLSTSLVYIKQLHLSKPALGNSWPFCLDHSYILEDQQHNKCLVHCNQSRKDLLGCSQLFLLLKGSFTHEYLTIDFYNGTPVSVSSKLHVSPSLYHSSTLNSPS.

As to quaternary structure, interacts with rlp1 and sws1.

It localises to the cytoplasm. It is found in the nucleus. In terms of biological role, involved in homologous recombination where it functions at an early stage of recombination in a pre-recombinogenic complex with rlp1 and sws1. Also has a role at a later stage of recombination in association with the rhp55-rhp57 complex. The protein is DNA repair protein rdl1 (rdl1) of Schizosaccharomyces pombe (strain 972 / ATCC 24843) (Fission yeast).